A 312-amino-acid chain; its full sequence is MAEFEDQLVFNSISARALKAYFTAKINEMVDELVTRKCPQKKKSQAKKPEVRIPVDLVKSSFVKKFGLCNYGGILISLINSLVENNFFTKDGKLDDTGKKELVLTDVEKRILNAIDKSSPLYIDISDVKVLAARLKRSATQFNFNGHTYHLENDKIEDLINQLVKDESIQLDEKSSIKDSMYVIPDELIDVLKTRLFRSPQVKDNIISRTRLYDYFTRVTKRDESSIYVILKDPRIASILSLETVKMGAFMYTKHSMLTNAISSRVDRYSKKFQESFYEDITEFVKENERVNVSRVVEYLTVPNITISSNAE.

It belongs to the orthopoxvirus OPG077 family.

It localises to the virion. Its function is as follows. DNA-binding protein which binds to the hairpin form of the viral telomeric sequence. Required for the production of mature virions (MV). The chain is Telomere-binding protein OPG077 (OPG077) from Vaccinia virus (strain L-IVP) (VACV).